The primary structure comprises 425 residues: Serine--tRNA ligase (425 aa).

An L-serine-binding site is contributed by 228 to 230 (TAE). 259–261 (RSE) is an ATP binding site. Glutamate 282 is an L-serine binding site. Residue 346–349 (EIAS) participates in ATP binding. Position 382 (serine 382) interacts with L-serine.

This sequence belongs to the class-II aminoacyl-tRNA synthetase family. Type-1 seryl-tRNA synthetase subfamily. In terms of assembly, homodimer. The tRNA molecule binds across the dimer.

The protein resides in the cytoplasm. It catalyses the reaction tRNA(Ser) + L-serine + ATP = L-seryl-tRNA(Ser) + AMP + diphosphate + H(+). It carries out the reaction tRNA(Sec) + L-serine + ATP = L-seryl-tRNA(Sec) + AMP + diphosphate + H(+). Its pathway is aminoacyl-tRNA biosynthesis; selenocysteinyl-tRNA(Sec) biosynthesis; L-seryl-tRNA(Sec) from L-serine and tRNA(Sec): step 1/1. Its function is as follows. Catalyzes the attachment of serine to tRNA(Ser). Is also able to aminoacylate tRNA(Sec) with serine, to form the misacylated tRNA L-seryl-tRNA(Sec), which will be further converted into selenocysteinyl-tRNA(Sec). The chain is Serine--tRNA ligase from Rickettsia africae (strain ESF-5).